The sequence spans 955 residues: Aminopeptidase A (955 aa).

At 1 to 17 (MDIEDKSSKMHCMKGKH) the chain is on the cytoplasmic side. Residues 18–38 (VAIICGVVIAVGLILGLGLGL) traverse the membrane as a helical; Signal-anchor for type II membrane protein segment. Residues 39–955 (GLKPEACNPP…LENSEQPNFV (917 aa)) are Extracellular-facing. Residues 49-69 (EDNGLLSTKPPTTSTPNVTNP) are disordered. Over residues 55–69 (STKPPTTSTPNVTNP) the composition is skewed to low complexity. N-linked (GlcNAc...) asparagine glycosylation is found at N65, N118, and N192. E218 provides a ligand contact to substrate. N-linked (GlcNAc...) asparagine glycans are attached at residues N312, N319, and N335. Position 352–356 (352–356 (GAMEN)) interacts with substrate. H388 is a Zn(2+) binding site. Catalysis depends on E389, which acts as the Proton acceptor. Zn(2+) contacts are provided by H392 and E411. 11 N-linked (GlcNAc...) asparagine glycosylation sites follow: N458, N547, N584, N592, N647, N674, N681, N759, N766, N823, and N836. R882 serves as a coordination point for substrate.

The protein belongs to the peptidase M1 family. In terms of assembly, homodimer; disulfide-linked. The cofactor is Zn(2+).

It is found in the cell membrane. The enzyme catalyses Release of N-terminal glutamate (and to a lesser extent aspartate) from a peptide.. With respect to regulation, the partially purified protein is inhibited by the aminopeptidase competitive inhibitors amastatin (Leu and acidic inhibitor), and bestatin (Leu inhibitor), by chelating agents EDTA, and 1,10-Phenanthroline, as well as by Zn(2+) ions. Substrate specificity is modulated by Ca(2+), Ba(2+), and Mn(2+) ions which enhances the enzymatic activity for cleavage of acidic residues. Functionally, venom protein that cleaves N-terminal acidic residues from peptides with high potency in presence of calcium. It may have several roles in venom including alteration of blood pressure by cleaving circulating angiotensin-2, general degradation of host tissue, increase of permeability to other venom components, and/or processing of other toxins in the venom. This chain is Aminopeptidase A, found in Gloydius brevicauda (Korean slamosa snake).